Consider the following 420-residue polypeptide: MKVEWYLDFVDLDYTPGRDELIVEYYFEPNGVSPEEAAGRIASESSIGTWTTLWKMPEMAKRSMAKVFYLEKSGEGYIAKIAYPLTLFEEGSIVQLLSAIAGNIFGMKALKNLRLLDFHPPYEYLRHFKGPQYGVKGIREFMGVKERPLTATVPKPKMGWSVDEYAEIAYELWSGGIDLLKDDENFTSFPFNRFEERVKKLYRIRDIVEAETEERKEYLINITGSVDVMEKRAELVANEGGQYVMIDIIVTGWSALQYMREVTEDLGLAIHAHRAMHAAFTRNPKHGITMYAIAKLARMIGVDQIHTGTAVGKMAGDYEEVKRINDFLLSKWEHIREVFPVASGGLHPGLMPELIRLFGKDLVIQAGGGVMGHPDGPRAGAKALRDAIDAALEGVDLEEKAKSSPELKKALDKWGYLKPK.

The Proton acceptor role is filled by lysine 155. A substrate-binding site is contributed by lysine 157. Positions 181, 183, and 184 each coordinate Mg(2+). Lysine 181 is subject to N6-carboxylysine. The Proton acceptor role is filled by histidine 273. Substrate-binding positions include arginine 274, histidine 306, 343–345, and 365–368; these read SGG and QAGG.

The protein belongs to the RuBisCO large chain family. Type III subfamily. In terms of assembly, homodimer or homodecamer. In contrast to form I RuBisCO, the form III RuBisCO is composed solely of large subunits. Mg(2+) serves as cofactor.

The catalysed reaction is 2 (2R)-3-phosphoglycerate + 2 H(+) = D-ribulose 1,5-bisphosphate + CO2 + H2O. It catalyses the reaction D-ribulose 1,5-bisphosphate + O2 = 2-phosphoglycolate + (2R)-3-phosphoglycerate + 2 H(+). Its function is as follows. Catalyzes the addition of molecular CO(2) and H(2)O to ribulose 1,5-bisphosphate (RuBP), generating two molecules of 3-phosphoglycerate (3-PGA). Functions in an archaeal AMP degradation pathway, together with AMP phosphorylase and R15P isomerase. In Pyrococcus furiosus (strain ATCC 43587 / DSM 3638 / JCM 8422 / Vc1), this protein is Ribulose bisphosphate carboxylase.